The primary structure comprises 455 residues: D-arabinitol 4-dehydrogenase (455 aa).

This sequence belongs to the mannitol dehydrogenase family. Monomer.

It carries out the reaction D-arabinitol + NAD(+) = D-xylulose + NADH + H(+). It participates in carbohydrate metabolism; D-arabinitol metabolism. This Klebsiella pneumoniae protein is D-arabinitol 4-dehydrogenase (dalD).